Consider the following 158-residue polypeptide: Dysbindin domain-containing protein 1 (158 aa).

Positions 1-38 (MEPSEGASPGGLVKEVDMPQAALSAPVPVTGTSGQSPM) are disordered. Serine 95 and serine 119 each carry phosphoserine. The tract at residues 96–158 (DDENVASDSH…ILTVERPKED (63 aa)) is disordered. Basic and acidic residues predominate over residues 125–141 (TRAEQNREKQPFGDPER).

This sequence belongs to the dysbindin family.

The polypeptide is Dysbindin domain-containing protein 1 (DBNDD1) (Bos taurus (Bovine)).